The following is a 274-amino-acid chain: Cytochrome b-c1 complex subunit Rieske, mitochondrial (274 aa).

Topologically, residues S79–R110 are mitochondrial matrix. The chain crosses the membrane as a helical span at residues K111–V137. Topologically, residues S138 to G274 are mitochondrial intermembrane. The region spanning E187–V272 is the Rieske domain. Residues C217, H219, C236, H239, and S241 each coordinate [2Fe-2S] cluster. Cysteines 222 and 238 form a disulfide.

The protein belongs to the Rieske iron-sulfur protein family. Component of the ubiquinol-cytochrome c oxidoreductase (cytochrome b-c1 complex, complex III, CIII), a multisubunit enzyme composed of 11 subunits. The complex is composed of 3 respiratory subunits cytochrome b, cytochrome c1 and Rieske protein UQCRFS1, 2 core protein subunits UQCRC1/QCR1 and UQCRC2/QCR2, and 6 low-molecular weight protein subunits UQCRH/QCR6, UQCRB/QCR7, UQCRQ/QCR8, UQCR10/QCR9, UQCR11/QCR10 and subunit 9, the cleavage product of Rieske protein UQCRFS1. The complex exists as an obligatory dimer and forms supercomplexes (SCs) in the inner mitochondrial membrane with NADH-ubiquinone oxidoreductase (complex I, CI) and cytochrome c oxidase (complex IV, CIV), resulting in different assemblies (supercomplex SCI(1)III(2)IV(1) and megacomplex MCI(2)III(2)IV(2)). Incorporation of the Rieske protein UQCRFS1 is the penultimate step in complex III assembly. Interacts with TTC19, which is involved in the clearance of UQCRFS1 fragments. In terms of assembly, component of the ubiquinol-cytochrome c oxidoreductase (cytochrome b-c1 complex, complex III, CIII). Subunit 9 corresponds to the mitochondrial targeting sequence (MTS) of Rieske protein UQCRFS1. It is retained after processing and incorporated inside complex III, where it remains bound to the complex and localizes between the 2 core subunits UQCRC1/QCR1 and UQCRC2/QCR2. The cofactor is [2Fe-2S] cluster. Post-translationally, proteolytic processing is necessary for the correct insertion of UQCRFS1 in the complex III dimer. Several fragments are generated during UQCRFS1 insertion, most probably due to the endogenous matrix-processing peptidase (MPP) activity of the 2 core protein subunits UQCRC1/QCR1 and UQCRC2/QCR2, which are homologous to the 2 mitochondrial-processing peptidase (MPP) subunits beta-MPP and alpha-MPP respectively. The action of the protease is also necessary for the clearance of the UQCRFS1 fragments.

The protein resides in the mitochondrion inner membrane. The enzyme catalyses a quinol + 2 Fe(III)-[cytochrome c](out) = a quinone + 2 Fe(II)-[cytochrome c](out) + 2 H(+)(out). Its function is as follows. Component of the ubiquinol-cytochrome c oxidoreductase, a multisubunit transmembrane complex that is part of the mitochondrial electron transport chain which drives oxidative phosphorylation. The respiratory chain contains 3 multisubunit complexes succinate dehydrogenase (complex II, CII), ubiquinol-cytochrome c oxidoreductase (cytochrome b-c1 complex, complex III, CIII) and cytochrome c oxidase (complex IV, CIV), that cooperate to transfer electrons derived from NADH and succinate to molecular oxygen, creating an electrochemical gradient over the inner membrane that drives transmembrane transport and the ATP synthase. The cytochrome b-c1 complex catalyzes electron transfer from ubiquinol to cytochrome c, linking this redox reaction to translocation of protons across the mitochondrial inner membrane, with protons being carried across the membrane as hydrogens on the quinol. In the process called Q cycle, 2 protons are consumed from the matrix, 4 protons are released into the intermembrane space and 2 electrons are passed to cytochrome c. The Rieske protein is a catalytic core subunit containing a [2Fe-2S] iron-sulfur cluster. It cycles between 2 conformational states during catalysis to transfer electrons from the quinol bound in the Q(0) site in cytochrome b to cytochrome c1. Incorporation of UQCRFS1 is the penultimate step in complex III assembly. Component of the ubiquinol-cytochrome c oxidoreductase (cytochrome b-c1 complex, complex III, CIII). UQCRFS1 undergoes proteolytic processing once it is incorporated in the complex III dimer. One of the fragments, called subunit 9, corresponds to its mitochondrial targeting sequence (MTS). The proteolytic processing is necessary for the correct insertion of UQCRFS1 in the complex III dimer, but the persistence of UQCRFS1-derived fragments may prevent newly imported UQCRFS1 to be processed and assembled into complex III and is detrimental for the complex III structure and function. The protein is Cytochrome b-c1 complex subunit Rieske, mitochondrial of Mus musculus (Mouse).